We begin with the raw amino-acid sequence, 89 residues long: Co-chaperonin GroES (89 aa).

It belongs to the GroES chaperonin family. As to quaternary structure, heptamer of 7 subunits arranged in a ring. Interacts with the chaperonin GroEL.

Its subcellular location is the cytoplasm. Together with the chaperonin GroEL, plays an essential role in assisting protein folding. The GroEL-GroES system forms a nano-cage that allows encapsulation of the non-native substrate proteins and provides a physical environment optimized to promote and accelerate protein folding. GroES binds to the apical surface of the GroEL ring, thereby capping the opening of the GroEL channel. This chain is Co-chaperonin GroES, found in Pseudothermotoga lettingae (strain ATCC BAA-301 / DSM 14385 / NBRC 107922 / TMO) (Thermotoga lettingae).